A 149-amino-acid polypeptide reads, in one-letter code: Calmodulin (149 aa).

Alanine 2 is subject to N-acetylalanine. EF-hand domains lie at 8-43 (EQIA…LGQN), 44-79 (PTEA…KMKD), 81-116 (DTEE…LGEK), and 117-149 (LTDE…MMAK). Positions 21, 23, 25, 27, 32, 57, 59, 61, 63, 68, 94, 96, 98, and 105 each coordinate Ca(2+). Position 116 is an N6,N6,N6-trimethyllysine (lysine 116). Ca(2+) contacts are provided by aspartate 130, aspartate 132, aspartate 134, histidine 136, and glutamate 141.

This sequence belongs to the calmodulin family.

Calmodulin mediates the control of a large number of enzymes, ion channels and other proteins by Ca(2+). Among the enzymes to be stimulated by the calmodulin-Ca(2+) complex are a number of protein kinases and phosphatases. In Stylonychia lemnae (Ciliate), this protein is Calmodulin.